We begin with the raw amino-acid sequence, 246 residues long: tRNA (guanine-N(1)-)-methyltransferase (246 aa).

Residues G114 and 134-139 each bind S-adenosyl-L-methionine; that span reads IGDYIL. A compositionally biased stretch (basic and acidic residues) spans 219–231; that stretch reads LRRPDLWERHEGA. Residues 219–246 are disordered; sequence LRRPDLWERHEGARAQSPSGARRQKKER.

Belongs to the RNA methyltransferase TrmD family. As to quaternary structure, homodimer.

Its subcellular location is the cytoplasm. It carries out the reaction guanosine(37) in tRNA + S-adenosyl-L-methionine = N(1)-methylguanosine(37) in tRNA + S-adenosyl-L-homocysteine + H(+). Its function is as follows. Specifically methylates guanosine-37 in various tRNAs. This is tRNA (guanine-N(1)-)-methyltransferase from Rhizorhabdus wittichii (strain DSM 6014 / CCUG 31198 / JCM 15750 / NBRC 105917 / EY 4224 / RW1) (Sphingomonas wittichii).